The primary structure comprises 103 residues: MAAKIRQNDEVIVLTGKDKGKRGKVTKVLPNGKVFVEGINIITKHEKPVPALGKAGGLVKKEAAIEASNVAIFNPKTNKADRVGFRFEDGKKVRFFKSNNEII.

Belongs to the universal ribosomal protein uL24 family. Part of the 50S ribosomal subunit.

In terms of biological role, one of two assembly initiator proteins, it binds directly to the 5'-end of the 23S rRNA, where it nucleates assembly of the 50S subunit. Its function is as follows. One of the proteins that surrounds the polypeptide exit tunnel on the outside of the subunit. The protein is Large ribosomal subunit protein uL24 of Haemophilus influenzae (strain PittEE).